Reading from the N-terminus, the 2311-residue chain is Proto-oncogene tyrosine-protein kinase ROS (2311 aa).

The signal sequence occupies residues 1–24; it reads MRNACLLLNRLGAFYFIWISAAYC. Topologically, residues 25–1873 are extracellular; the sequence is SFSKNCQDLC…LAKDTVTSPD (1849 aa). N-linked (GlcNAc...) asparagine glycans are attached at residues asparagine 49, asparagine 65, asparagine 77, asparagine 123, asparagine 132, asparagine 265, asparagine 287, asparagine 307, asparagine 333, asparagine 377, asparagine 405, asparagine 480, asparagine 607, asparagine 628, asparagine 706, asparagine 714, asparagine 911, asparagine 940, asparagine 962, asparagine 971, asparagine 1110, asparagine 1154, asparagine 1180, asparagine 1233, asparagine 1255, asparagine 1282, asparagine 1316, asparagine 1470, asparagine 1509, asparagine 1588, asparagine 1628, asparagine 1682, asparagine 1696, and asparagine 1730. Fibronectin type-III domains follow at residues 110 to 202 and 203 to 294; these read KPGA…ASGV and PTTA…PESK. Positions 571-671 constitute a Fibronectin type-III 3 domain; the sequence is LPTLPRLVTV…EPFRGMTFEE (101 aa). Fibronectin type-III domains are found at residues 952–1047 and 1051–1158; these read VPES…APEG and APAN…SSDI. Fibronectin type-III domains follow at residues 1459–1569, 1570–1669, 1671–1766, and 1767–1868; these read DTEK…TLYG, VPEG…AKTF, TPLS…TTAG, and VPSK…AKDT. A compositionally biased stretch (low complexity) spans 1754 to 1764; sequence STSSPTSFKTT. The interval 1754 to 1786 is disordered; that stretch reads STSSPTSFKTTAGVPSKPGTPKRAEDSKNSVQW. Basic and acidic residues predominate over residues 1775–1786; that stretch reads KRAEDSKNSVQW. Asparagine 1792, asparagine 1795, and asparagine 1822 each carry an N-linked (GlcNAc...) asparagine glycan. A helical membrane pass occupies residues 1874–1898; it reads ITAIVAVIGAVVLGLTIIILFGFVW. The Cytoplasmic segment spans residues 1899–2311; that stretch reads HQRWKSRKPA…SISSAELTSV (413 aa). Residues 1961-2240 form the Protein kinase domain; it reads LNLHKLLGSG…KLQEIRHSPL (280 aa). Residues 1967–1975 and lysine 1996 contribute to the ATP site; that span reads LGSGAFGEV. Catalysis depends on aspartate 2095, which acts as the Proton acceptor. The residue at position 2131 (tyrosine 2131) is a Phosphotyrosine; by autocatalysis.

It belongs to the protein kinase superfamily. Tyr protein kinase family. Insulin receptor subfamily. As to quaternary structure, interacts with VAV3; constitutive interaction mediating VAV3 phosphorylation. As to expression, highest expression in kidney. Also expressed in gonad, thymus, bursa, brain and kidney.

The protein resides in the cell membrane. The catalysed reaction is L-tyrosyl-[protein] + ATP = O-phospho-L-tyrosyl-[protein] + ADP + H(+). In terms of biological role, orphan receptor tyrosine kinase (RTK) that may activate several downstream signaling pathways related to cell differentiation, proliferation, growth and survival including the PI3 kinase-mTOR signaling pathway. Mediates the phosphorylation of PTPN11, an activator of this pathway. May also phosphorylate and activate the transcription factor STAT3 to control anchorage-independent cell growth. Mediates the phosphorylation and the activation of VAV3, a guanine nucleotide exchange factor regulating cell morphology. May activate other downstream signaling proteins including AKT1, MAPK1, MAPK3, IRS1, and PLCG2. This Gallus gallus (Chicken) protein is Proto-oncogene tyrosine-protein kinase ROS (ROS1).